The chain runs to 311 residues: Pyrimidine-specific ribonucleoside hydrolase RihA (311 aa).

The active site involves H240.

Belongs to the IUNH family. RihA subfamily.

Hydrolyzes with equal efficiency cytidine or uridine to ribose and cytosine or uracil, respectively. The protein is Pyrimidine-specific ribonucleoside hydrolase RihA of Escherichia coli (strain ATCC 8739 / DSM 1576 / NBRC 3972 / NCIMB 8545 / WDCM 00012 / Crooks).